The sequence spans 317 residues: Ferrochelatase (317 aa).

Fe cation is bound by residues His-191 and Glu-271.

This sequence belongs to the ferrochelatase family.

The protein localises to the cytoplasm. The enzyme catalyses heme b + 2 H(+) = protoporphyrin IX + Fe(2+). The protein operates within porphyrin-containing compound metabolism; protoheme biosynthesis; protoheme from protoporphyrin-IX: step 1/1. In terms of biological role, catalyzes the ferrous insertion into protoporphyrin IX. The polypeptide is Ferrochelatase (Thermus thermophilus (strain ATCC BAA-163 / DSM 7039 / HB27)).